A 250-amino-acid polypeptide reads, in one-letter code: 3-deoxy-manno-octulosonate cytidylyltransferase (250 aa).

This sequence belongs to the KdsB family.

The protein resides in the cytoplasm. The enzyme catalyses 3-deoxy-alpha-D-manno-oct-2-ulosonate + CTP = CMP-3-deoxy-beta-D-manno-octulosonate + diphosphate. The protein operates within nucleotide-sugar biosynthesis; CMP-3-deoxy-D-manno-octulosonate biosynthesis; CMP-3-deoxy-D-manno-octulosonate from 3-deoxy-D-manno-octulosonate and CTP: step 1/1. It functions in the pathway bacterial outer membrane biogenesis; lipopolysaccharide biosynthesis. Activates KDO (a required 8-carbon sugar) for incorporation into bacterial lipopolysaccharide in Gram-negative bacteria. The sequence is that of 3-deoxy-manno-octulosonate cytidylyltransferase from Yersinia pseudotuberculosis serotype O:1b (strain IP 31758).